We begin with the raw amino-acid sequence, 434 residues long: Glutamate-1-semialdehyde 2,1-aminomutase (434 aa).

K266 is modified (N6-(pyridoxal phosphate)lysine).

It belongs to the class-III pyridoxal-phosphate-dependent aminotransferase family. HemL subfamily. Homodimer. Pyridoxal 5'-phosphate serves as cofactor.

The protein resides in the cytoplasm. It catalyses the reaction (S)-4-amino-5-oxopentanoate = 5-aminolevulinate. It participates in porphyrin-containing compound metabolism; protoporphyrin-IX biosynthesis; 5-aminolevulinate from L-glutamyl-tRNA(Glu): step 2/2. The protein is Glutamate-1-semialdehyde 2,1-aminomutase of Fusobacterium nucleatum subsp. nucleatum (strain ATCC 25586 / DSM 15643 / BCRC 10681 / CIP 101130 / JCM 8532 / KCTC 2640 / LMG 13131 / VPI 4355).